Reading from the N-terminus, the 359-residue chain is Protein disulfide-isomerase C17H9.14c (359 aa).

The first 19 residues, 1 to 19 (MRLPLLSFVIFALFALVFA), serve as a signal peptide directing secretion. Thioredoxin domains lie at 20 to 130 (SGVV…EKTG) and 134 to 250 (RKIV…KKSG). Residues C51 and C54 each act as nucleophile in the active site. Disulfide bonds link C51–C54 and C170–C173.

The protein belongs to the protein disulfide isomerase family.

It catalyses the reaction Catalyzes the rearrangement of -S-S- bonds in proteins.. In terms of biological role, participates in the folding of proteins containing disulfide bonds, may be involved in glycosylation, prolyl hydroxylation and triglyceride transfer. The polypeptide is Protein disulfide-isomerase C17H9.14c (Schizosaccharomyces pombe (strain 972 / ATCC 24843) (Fission yeast)).